We begin with the raw amino-acid sequence, 448 residues long: UPF0210 protein Pisl_0759 (448 aa).

The protein belongs to the UPF0210 family.

This chain is UPF0210 protein Pisl_0759, found in Pyrobaculum islandicum (strain DSM 4184 / JCM 9189 / GEO3).